Consider the following 840-residue polypeptide: MADAEDFCPHLDSIGEVTKEDLILKSKGTCESCGVGGPNLWACLQDGCQSVGCGESYADHSTLHAQDFPSPAHPLKSVPIAVGDDGESESDEDDIKPRGLTGMKNIGNSCYMNAALQALSNCPPLTQFFLECGGLVRTDKKPALCKSYQKLVSELWHKKRPSYVVPSSLYHGIKLINPLFRGYSQQDTQEFLRCLMDQLHEELKEPILPENQEQEEEERDDQREGERGGTTEEDFLSCDSGGEMGDGEGGGGVGTLSEMELLIREEVGRGLSEKEKLKERKLSYCHRRTSSEQADEDADVDTAMIPEPDNDAYMHCSSRSCSPHPVESISKHSSTPPRSSPLRTAHSYVLKKAQVLSGGKKRSEVRYRSVISDIFDGSILSLVQCLTCDRVSTTIETFQDLSLPIPGKEDLAKLHSTIHQSTVIKAGTCGDSYAAQGWLAFVMDYIRRFVVSCIPSWFWGPMITLEDCLAAFFAADELKGDNMYSCERCKKLRNGVKYCKVLRLPEVLCIHLKRFRHEVMYSFKIGSHVSFPLEGLNLRPFLAKECVSRITTYDLLAVICHHGSASSGHYISYCQNVINGQWYEFDDQYVTEVHETVVQNAEAYVLFYRKSSEEAERERQKVVSLAAMKESGLLQFYISREWLNKFNTFAEPGPISNQSFLCAHGGIPPNKYHYIDDLVVILPQSVWEYLYNRFGGGPAVNHLYVCSICQVEIEALAKRRKTEIDTFIKLNKAFQAEEAPSVIYCISMQWFREWEAFVKAKDSDPPGPIDNSKVALTKSSGHVQLKQGADYGQISEETWNYLLNIYGGGPEIAIRQTVAQYQDPEHLHGEQKIEAETRAG.

Residues 6-117 form a UBP-type; degenerate zinc finger; it reads DFCPHLDSIG…NSCYMNAALQ (112 aa). Residues Cys-30, Cys-33, Cys-53, and His-60 each coordinate Zn(2+). Residues 101–611 form the USP domain; sequence TGMKNIGNSC…EAYVLFYRKS (511 aa). The active-site Nucleophile is the Cys-110. 2 disordered regions span residues 205-254 and 315-342; these read EPIL…GGVG and HCSS…SSPL. The span at 220–230 shows a compositional bias: basic and acidic residues; that stretch reads DDQREGERGGT. Gly residues predominate over residues 242–254; that stretch reads GEMGDGEGGGGVG. The segment covering 333–342 has biased composition (low complexity); the sequence is SSTPPRSSPL. The active-site Proton acceptor is the His-569. DUSP domains are found at residues 613-706 and 715-818; these read EEAE…LYVC and ALAK…RQTV.

Belongs to the peptidase C19 family. USP20/USP33 subfamily.

It is found in the cytoplasm. Its subcellular location is the perinuclear region. The protein localises to the cytoskeleton. The protein resides in the microtubule organizing center. It localises to the centrosome. It carries out the reaction Thiol-dependent hydrolysis of ester, thioester, amide, peptide and isopeptide bonds formed by the C-terminal Gly of ubiquitin (a 76-residue protein attached to proteins as an intracellular targeting signal).. Functionally, deubiquitinating enzyme involved in beta-2 adrenergic receptor (adrb2) recycling. Acts as a regulator of G-protein coupled receptor (GPCR) signaling by mediating the deubiquitination beta-2 adrenergic receptor (adrb2). Plays a central role in adrb2 recycling and resensitization after prolonged agonist stimulation by constitutively binding adrb2, mediating deubiquitination of adrb2 and inhibiting lysosomal trafficking of adrb2. Mediates deubiquitination of both 'Lys-48'- and 'Lys-63'-linked polyubiquitin chains. In Xenopus laevis (African clawed frog), this protein is Ubiquitin carboxyl-terminal hydrolase 20 (usp20).